Consider the following 420-residue polypeptide: 4-hydroxy-3-methylbut-2-en-1-yl diphosphate synthase (flavodoxin) (420 aa).

The [4Fe-4S] cluster site is built by Cys307, Cys310, Cys353, and Glu360.

Belongs to the IspG family. The cofactor is [4Fe-4S] cluster.

It carries out the reaction (2E)-4-hydroxy-3-methylbut-2-enyl diphosphate + oxidized [flavodoxin] + H2O + 2 H(+) = 2-C-methyl-D-erythritol 2,4-cyclic diphosphate + reduced [flavodoxin]. Its pathway is isoprenoid biosynthesis; isopentenyl diphosphate biosynthesis via DXP pathway; isopentenyl diphosphate from 1-deoxy-D-xylulose 5-phosphate: step 5/6. In terms of biological role, converts 2C-methyl-D-erythritol 2,4-cyclodiphosphate (ME-2,4cPP) into 1-hydroxy-2-methyl-2-(E)-butenyl 4-diphosphate. This is 4-hydroxy-3-methylbut-2-en-1-yl diphosphate synthase (flavodoxin) from Brucella melitensis biotype 2 (strain ATCC 23457).